Consider the following 1350-residue polypeptide: MFERINKIKKKIKEKLSYSILKDEKIDYYNLPCPEESASFLSKLTFSWTQRMLMTGYFRGPIQMSDICDLPDDVKVQKTNPILDDIDFGNSKWPLLKFIYTNFVTKNKKSIFIVILCAIFSILSPLCLKYFIKYIQLSKNEKTFLTGLGYCVLLFVGTFSYTLSQQFLYWFGMRTSLHVRGALSQRIYEKMLKLSSSGGKKYSSGSIMNLISTDIGLFADFFWIGHLEIIIFPIQITALLALLCWIVGWSGLVGFGVMIISLPINTFFGSKMSKNLMLSLGYSDTRCNLTSEFINGIRFLKLYAWEKLFLDRIEEQRRLQLKYLYRRVIFAIFEKMLSQTTNAVVLVSTFSVYSINNEIELSVAFTAITIFVNLRQPIMRLPEAIHNLLGLIPSAKRVESFLQLSEIQTQPFINFNNKSINDDILIDNGTFNWNQDNDDYITNNGDNNNNNNKNEIKKRLIEKSEEEYETTTTTTDDNNNNNYESYLLNNINFKAPAGKLTIICGVVGSGKTSLVSGLIGEIYKVSGRVNTPNKISFTTQQSFLLSTSLRENILFGNEMNLERYKKVIEACCLAPDLLQLAAKDLTEIGERGINLSGGQKQRISLARALYANSDCYILDEPLSAVDPEVATHLFNHCIQGMMNDKTRILVTHQLQFIPSADHIVVVDNGKLVQGTYSELKSKGIDFESIMKTKKLNIDNQQQQQQQQQHDENEIIDENPMKKSNSLIESNKLINIDEIISDKHDSNLIEKAKLLVKEDKSEGAIGLHVYREYFKHGSSTFFFIATCVVYFFSQAIFQMTDFWLSTWSQHKLQGKSDSFYIFYYIIFIGLFIVTLVIRYFMLAHVTFSASKNLHTSLLNSVGFASCQFFDTNPSGRILNRFSKDIAEIDLLLYDLFSDVLYCGSTVVFAICVMIYISPLISLPFLVLIIVYNIIKNIYAVSSRDLKRYESITRSPIFSLLQETFNGLVTIRSYQQQNRFISMMQDHININLRLFYYSFSIHRWIGVRLEFISALVVFLTAFFSLFNSNAGFSVLSVTTAIGMCTYLNWAVRQFVELEVKMNSVERIESYINTPKEGNRFTIDNEEEGEENMINLNEKWPSKGEIEFRDVEIRYRPTSEPSLKNLSFKINSNDHIGIVGRTGAGKSTVGISLFRMVECSKGSILIDGIDISKIGLHDLRSSLGIVPQDPFIFSGTIRLNIDPFNKYTDSEIWVALEKVKLKSTISSMPLKLETMIEEGGDGLSFGQKQLLCLSRTILKNSKVVLMDEATSGIDYVTGDLIKQTLLENFNDCTMLTIAHRLDTIIDSTKIAVVDKGELIEYDTPINLINTKNSKFSKLVKYQTDFHKENEKNF.

The 284-residue stretch at 107–390 (NKKSIFIVIL…LPEAIHNLLG (284 aa)) folds into the ABC transmembrane type-1 1 domain. A run of 4 helical transmembrane segments spans residues 111–131 (IFIV…LKYF), 143–163 (TFLT…SYTL), 215–235 (IGLF…FPIQ), and 240–260 (LALL…VMII). Residues 462–481 (EKSEEEYETTTTTTDDNNNN) form a disordered region. Positions 470-481 (TTTTTTDDNNNN) are enriched in low complexity. An ABC transporter 1 domain is found at 473 to 693 (TTTDDNNNNN…IDFESIMKTK (221 aa)). An ATP-binding site is contributed by 505-512 (GVVGSGKT). Positions 774-1061 (KHGSSTFFFI…FVELEVKMNS (288 aa)) constitute an ABC transmembrane type-1 2 domain. A run of 6 helical transmembrane segments spans residues 776–796 (GSST…QAIF), 816–836 (DSFY…TLVI), 887–907 (IDLL…TVVF), 909–929 (ICVM…LIIV), 1003–1023 (IGVR…FFSL), and 1029–1049 (GFSV…NWAV). Residues 1103–1337 (IEFRDVEIRY…KNSKFSKLVK (235 aa)) form the ABC transporter 2 domain. ATP is bound at residue 1137-1144 (GRTGAGKS).

Belongs to the ABC transporter superfamily. ABCC family. Conjugate transporter (TC 3.A.1.208) subfamily.

Its subcellular location is the membrane. This chain is ABC transporter C family member 13 (abcC13), found in Dictyostelium discoideum (Social amoeba).